Here is a 200-residue protein sequence, read N- to C-terminus: Probable molybdenum cofactor guanylyltransferase (200 aa).

GTP is bound by residues 9–11, K21, D69, and D100; that span reads LAG. D100 serves as a coordination point for Mg(2+).

The protein belongs to the MobA family. Mg(2+) is required as a cofactor.

The protein resides in the cytoplasm. It carries out the reaction Mo-molybdopterin + GTP + H(+) = Mo-molybdopterin guanine dinucleotide + diphosphate. Functionally, transfers a GMP moiety from GTP to Mo-molybdopterin (Mo-MPT) cofactor (Moco or molybdenum cofactor) to form Mo-molybdopterin guanine dinucleotide (Mo-MGD) cofactor. This Bacillus cereus (strain AH820) protein is Probable molybdenum cofactor guanylyltransferase.